The sequence spans 1374 residues: Mitogen-activated protein kinase kinase kinase 5 (1374 aa).

The tract at residues 68–87 is disordered; sequence PAATSSSSATRGRGSSVGGG. Over residues 69 to 81 the composition is skewed to low complexity; that stretch reads AATSSSSATRGRG. Asymmetric dimethylarginine; by PRMT1 occurs at positions 78 and 80. Phosphoserine; by PIM1 and PKB/AKT1 is present on Ser83. The tract at residues 649-1374 is interaction with PPIA/CYPA; sequence MVNTITEEKG…AIIDFRNKQT (726 aa). The Protein kinase domain maps to 680 to 938; sequence NGDRVVLGKG…ANDLLVDEFL (259 aa). Residues 686–694 and Lys709 contribute to the ATP site; that span reads LGKGTYGIV. Tyr718 carries the post-translational modification Phosphotyrosine. The active-site Proton acceptor is the Asp803. Thr813 is subject to Phosphothreonine; by autocatalysis. The residue at position 838 (Thr838) is a Phosphothreonine; by autocatalysis, MELK and MAP3K6. The residue at position 842 (Thr842) is a Phosphothreonine; by autocatalysis. A Phosphoserine modification is found at Ser958. Position 966 is a phosphoserine; by autocatalysis (Ser966). A phosphoserine mark is found at Ser1029 and Ser1033. The segment at 1182 to 1209 is disordered; it reads SESDTADQEDLDVEDDHEEQPSNQTVRR. Over residues 1185–1199 the composition is skewed to acidic residues; that stretch reads DTADQEDLDVEDDHE. A coiled-coil region spans residues 1245-1285; it reads LGRMKIETNRLLEELVRKEKELQALLHRAIEEKDQEIKHLK.

This sequence belongs to the protein kinase superfamily. STE Ser/Thr protein kinase family. MAP kinase kinase kinase subfamily. Homodimer when inactive. Binds both upstream activators and downstream substrates in multimolecular complexes. Part of a cytoplasmic complex made of HIPK1, DAB2IP and MAP3K5 in response to TNF. This complex formation promotes MAP3K5-JNK activation and subsequent apoptosis. Interacts with SOCS1 which recognizes phosphorylation of Tyr-718 and induces MAP3K5/ASK1 degradation in endothelial cells. Interacts with the 14-3-3 family proteins such as YWHAB, YWHAE, YWHAQ, YWHAH, YWHAZ and SFN. Interacts with ARRB2, BIRC2, DAB2IP, IGF1R, MAP3K6/ASK2, PGAM5, PIM1, PPP5C, SOCS1, STUB1, TRAF2, TRAF6 and TXN. Interacts with ERN1 in a TRAF2-dependent manner. Interacts with calcineurin subunit PPP3R1. Interacts with PPM1L. Interacts (via N-terminus) with RAF1 and this interaction inhibits the proapoptotic function of MAP3K5. Interacts with DAB2IP (via N-terminus C2 domain); the interaction occurs in a TNF-alpha-dependent manner. Interacts with DUSP13A; may positively regulate apoptosis. Interacts with DAXX. Interacts with RC3H2. Interacts with PPIA/CYPA. Interacts with PRMT1; the interaction results in MAP3K5 methylation by PRMT1 which inhibits MAP3K5 activation. Interacts with TRAF2; the interaction is inhibited by PRMT1. Interacts with TRIM48. As to quaternary structure, (Microbial infection) Interacts with HIV-1 Nef; this interaction inhibits MAP3K5 signaling. The cofactor is Mg(2+). Post-translationally, phosphorylated at Thr-838 through autophosphorylation and by MAP3K6/ASK2 which leads to activation. Thr-838 is dephosphorylated by PPP5C. Ser-83 and Ser-1033 are inactivating phosphorylation sites, the former of which is phosphorylated by AKT1. Phosphorylated at Ser-966 which induces association of MAP3K5/ASK1 with the 14-3-3 family proteins and suppresses MAP3K5/ASK1 activity. Calcineurin (CN) dephosphorylates this site. Also dephosphorylated and activated by PGAM5. Phosphorylation at Ser-966 in response to oxidative stress is negatively regulated by PPIA/CYPA. In terms of processing, ubiquitinated. Tumor necrosis factor (TNF) induces TNFR2-dependent ubiquitination, leading to proteasomal degradation. Ubiquitinated by RC3H2 in a TRIM48-dependent manner. Methylation at Arg-78 and Arg-80 by PRMT1 promotes association of MAP3K5 with thioredoxin and negatively regulates MAP3K5 association with TRAF2, inhibiting MAP3K5 activation. Methylation is blocked by ubiquitination of PRMT1 by TRIM48. In terms of tissue distribution, abundantly expressed in heart and pancreas.

The protein resides in the cytoplasm. The protein localises to the endoplasmic reticulum. It carries out the reaction L-seryl-[protein] + ATP = O-phospho-L-seryl-[protein] + ADP + H(+). The enzyme catalyses L-threonyl-[protein] + ATP = O-phospho-L-threonyl-[protein] + ADP + H(+). Its activity is regulated as follows. Activated by various stressors, including oxidative stress, endoplasmic reticulum stress, and calcium overload, as well as by receptor-mediated inflammatory signals, such as the tumor necrosis factor (TNF) and lipopolysaccharide (LPS). Homophilic association of MAP3K5/ASK1 through the C-terminal coiled-coil domains and the heteromeric complex formation of MAP3K5/ASK1 with the reduced form of thioredoxin (TXN), constitutes an inactive form of the kinase. Upon ROS-induced dissociation of TXN from MAP3K5/ASK1, TRAF2 and TRAF6 are reciprocally recruited to MAP3K5/ASK1 and form the active MAP3K5/ASK1 signalosome, in which TRAF2 and TRAF6 appear to facilitate the active configuration of MAP3K5/ASK1. MAP3K5/ASK1 activity is also regulated through several phosphorylation and dephosphorylation events. Thr-838 is an activating phosphorylation site that is autophosphorylated and phosphorylated by MAP3K6/ASK2 and dephosphorylated by PPP5C. Ser-83 and Ser-1033 are inactivating phosphorylation sites, the former of which is phosphorylated by AKT1. Phosphorylation of Ser-966 induces association of MAP3K5/ASK1 with the 14-3-3 family proteins, which suppresses MAP3K5/ASK1 activity. Calcium/calmodulin-activated protein phosphatase calcineurin (PPP3CA) has been shown to directly dephosphorylate this site. SOCS1 binds to ASK1 by recognizing phosphorylation of Tyr-718 and induces MAP3K5/ASK1 degradation in endothelial cells. Also dephosphorylated and activated by PGAM5. Contains an N-terminal autoinhibitory domain. Once activated targeted for proteasomal degradation by RC3H2-mediated ubiquitination. In terms of biological role, serine/threonine kinase which acts as an essential component of the MAP kinase signal transduction pathway. Plays an important role in the cascades of cellular responses evoked by changes in the environment. Mediates signaling for determination of cell fate such as differentiation and survival. Plays a crucial role in the apoptosis signal transduction pathway through mitochondria-dependent caspase activation. MAP3K5/ASK1 is required for the innate immune response, which is essential for host defense against a wide range of pathogens. Mediates signal transduction of various stressors like oxidative stress as well as by receptor-mediated inflammatory signals, such as the tumor necrosis factor (TNF) or lipopolysaccharide (LPS). Once activated, acts as an upstream activator of the MKK/JNK signal transduction cascade and the p38 MAPK signal transduction cascade through the phosphorylation and activation of several MAP kinase kinases like MAP2K4/SEK1, MAP2K3/MKK3, MAP2K6/MKK6 and MAP2K7/MKK7. These MAP2Ks in turn activate p38 MAPKs and c-jun N-terminal kinases (JNKs). Both p38 MAPK and JNKs control the transcription factors activator protein-1 (AP-1). In Homo sapiens (Human), this protein is Mitogen-activated protein kinase kinase kinase 5 (MAP3K5).